Here is a 444-residue protein sequence, read N- to C-terminus: Na(+)/H(+) antiporter NhaA (444 aa).

11 consecutive transmembrane segments (helical) span residues 27–47 (TTGLMLMLMTVVALLLANSPL), 72–92 (IHHWINDGLMAIFFFIIGLEI), 108–128 (MLPILAAIGGMALPALIYYAI), 136–156 (AGWGIPMATDIAFAISALVLL), 167–187 (FLVALAIVDDLGAVVVIALFY), 190–210 (EINMLPLLFAFISFLVLVSFN), 212–232 (FGIHAILPYFVVGFIMWLFML), 312–332 (HLPVSLVVIPLFALANAGVSI), 349–369 (VMAGLVFGKVFGIAGISYLAI), 385–405 (VFGVAFLGGIGFTMSIFIAEL), and 419–439 (IGILAASLFAGIFGFIWLRFI).

Belongs to the NhaA Na(+)/H(+) (TC 2.A.33) antiporter family.

It is found in the cell inner membrane. The catalysed reaction is Na(+)(in) + 2 H(+)(out) = Na(+)(out) + 2 H(+)(in). Functionally, na(+)/H(+) antiporter that extrudes sodium in exchange for external protons. In Sulfurimonas denitrificans (strain ATCC 33889 / DSM 1251) (Thiomicrospira denitrificans (strain ATCC 33889 / DSM 1251)), this protein is Na(+)/H(+) antiporter NhaA.